A 141-amino-acid chain; its full sequence is Acetyltransferase YpeA (141 aa).

The N-acetyltransferase domain maps to 1–141 (MEIRVFRQED…GKRLIEDEEY (141 aa)).

It belongs to the acetyltransferase family. YpeA subfamily.

The sequence is that of Acetyltransferase YpeA (ypeA) from Escherichia coli (strain K12).